We begin with the raw amino-acid sequence, 540 residues long: Chaperonin GroEL (540 aa).

ATP-binding positions include 29–32, 86–90, Gly-413, 476–478, and Asp-492; these read TIGP, DGTTT, and NAA.

This sequence belongs to the chaperonin (HSP60) family. Forms a cylinder of 14 subunits composed of two heptameric rings stacked back-to-back. Interacts with the co-chaperonin GroES.

The protein localises to the cytoplasm. It catalyses the reaction ATP + H2O + a folded polypeptide = ADP + phosphate + an unfolded polypeptide.. Functionally, together with its co-chaperonin GroES, plays an essential role in assisting protein folding. The GroEL-GroES system forms a nano-cage that allows encapsulation of the non-native substrate proteins and provides a physical environment optimized to promote and accelerate protein folding. This Staphylococcus saprophyticus subsp. saprophyticus (strain ATCC 15305 / DSM 20229 / NCIMB 8711 / NCTC 7292 / S-41) protein is Chaperonin GroEL.